The chain runs to 112 residues: Abdominal ganglion neuropeptides L5-67 (112 aa).

Positions 1 to 23 (MKTAVLLVCLAYVMAAILSLCAS) are cleaved as a signal peptide. At Phe33 the chain carries Phenylalanine amide.

In terms of processing, the prohormone is proteolytically cleaved in 2 steps, yielding first 2 products: luqin and PRMP. In the second step, PRMP is cleaved to yield luqin-B and luqin-C. In terms of tissue distribution, neurons L2-4 and L6, also called giant dorsal LUQ (Left Upper Quadrant) neurons of the abdominal ganglion. Also expressed in smaller neurons in the CNS and in peripheral organs such as the kidney.

It localises to the secreted. The protein is Abdominal ganglion neuropeptides L5-67 of Aplysia californica (California sea hare).